The primary structure comprises 335 residues: Dihydroorotate dehydrogenase (quinone) (335 aa).

Residues 59–63 (AGADK) and Thr-83 contribute to the FMN site. Lys-63 lines the substrate pocket. Position 108–112 (108–112 (NRNGF)) interacts with substrate. The FMN site is built by Asn-136 and Asn-169. Asn-169 contributes to the substrate binding site. Ser-172 functions as the Nucleophile in the catalytic mechanism. Residue Asn-174 participates in substrate binding. FMN contacts are provided by Lys-214 and Gly-242. 243 to 244 (NT) provides a ligand contact to substrate. Residues Gly-265, Gly-294, and 315–316 (YS) contribute to the FMN site.

Belongs to the dihydroorotate dehydrogenase family. Type 2 subfamily. Monomer. FMN is required as a cofactor.

The protein resides in the cell membrane. It catalyses the reaction (S)-dihydroorotate + a quinone = orotate + a quinol. It participates in pyrimidine metabolism; UMP biosynthesis via de novo pathway; orotate from (S)-dihydroorotate (quinone route): step 1/1. Catalyzes the conversion of dihydroorotate to orotate with quinone as electron acceptor. The polypeptide is Dihydroorotate dehydrogenase (quinone) (Glaesserella parasuis serovar 5 (strain SH0165) (Haemophilus parasuis)).